A 183-amino-acid polypeptide reads, in one-letter code: Holliday junction branch migration complex subunit RuvA (183 aa).

Residues 1 to 63 form a domain I region; sequence MIVGLIGVVE…EDAHLLYGFL (63 aa). Residues 64–139 are domain II; sequence EESEKILFER…FFIQDENRPA (76 aa). Residue Ala139 is a region of interest, flexible linker. The interval 139–183 is domain III; the sequence is ARNEVFLALESLGFKSAEINPVLKTLKPHLSIEAAIKEALQQLRS.

Belongs to the RuvA family. As to quaternary structure, homotetramer. Forms an RuvA(8)-RuvB(12)-Holliday junction (HJ) complex. HJ DNA is sandwiched between 2 RuvA tetramers; dsDNA enters through RuvA and exits via RuvB. An RuvB hexamer assembles on each DNA strand where it exits the tetramer. Each RuvB hexamer is contacted by two RuvA subunits (via domain III) on 2 adjacent RuvB subunits; this complex drives branch migration. In the full resolvosome a probable DNA-RuvA(4)-RuvB(12)-RuvC(2) complex forms which resolves the HJ.

The protein resides in the cytoplasm. The RuvA-RuvB-RuvC complex processes Holliday junction (HJ) DNA during genetic recombination and DNA repair, while the RuvA-RuvB complex plays an important role in the rescue of blocked DNA replication forks via replication fork reversal (RFR). RuvA specifically binds to HJ cruciform DNA, conferring on it an open structure. The RuvB hexamer acts as an ATP-dependent pump, pulling dsDNA into and through the RuvAB complex. HJ branch migration allows RuvC to scan DNA until it finds its consensus sequence, where it cleaves and resolves the cruciform DNA. The chain is Holliday junction branch migration complex subunit RuvA from Helicobacter pylori (strain J99 / ATCC 700824) (Campylobacter pylori J99).